The following is a 237-amino-acid chain: Phosphoribosylaminoimidazole-succinocarboxamide synthase (237 aa).

Belongs to the SAICAR synthetase family.

It catalyses the reaction 5-amino-1-(5-phospho-D-ribosyl)imidazole-4-carboxylate + L-aspartate + ATP = (2S)-2-[5-amino-1-(5-phospho-beta-D-ribosyl)imidazole-4-carboxamido]succinate + ADP + phosphate + 2 H(+). Its pathway is purine metabolism; IMP biosynthesis via de novo pathway; 5-amino-1-(5-phospho-D-ribosyl)imidazole-4-carboxamide from 5-amino-1-(5-phospho-D-ribosyl)imidazole-4-carboxylate: step 1/2. The protein is Phosphoribosylaminoimidazole-succinocarboxamide synthase of Pseudomonas fluorescens (strain SBW25).